The primary structure comprises 157 residues: Protein Smg (157 aa).

The protein belongs to the Smg family.

The sequence is that of Protein Smg from Yersinia pestis (strain Pestoides F).